The primary structure comprises 108 residues: UPF0060 membrane protein YnfA (108 aa).

The Periplasmic portion of the chain corresponds to 1–5 (MLKTT). A helical membrane pass occupies residues 6 to 26 (LLFFVTALCEIIGCFLPWLWI). Topologically, residues 27-30 (KRGA) are cytoplasmic. The chain crosses the membrane as a helical span at residues 31–51 (SVWWLLPAAASLALFVWLLTL). The Periplasmic segment spans residues 52 to 60 (HPAASGRVY). The helical transmembrane segment at 61-81 (AAYGGVYVCTALLWLRVVDGV) threads the bilayer. Topologically, residues 82–84 (RLT) are cytoplasmic. A helical membrane pass occupies residues 85–105 (VYDWSGALIALCGMLIIVVGW). Over 106–108 (GRT) the chain is Periplasmic.

This sequence belongs to the UPF0060 family.

It localises to the cell inner membrane. The chain is UPF0060 membrane protein YnfA from Salmonella typhi.